A 342-amino-acid chain; its full sequence is Flavanone 3-dioxygenase 2 (342 aa).

The Fe2OG dioxygenase domain occupies Q193–P293. 3 residues coordinate Fe cation: H217, D219, and H274. R284 contacts 2-oxoglutarate.

Belongs to the iron/ascorbate-dependent oxidoreductase family. Requires Fe(2+) as cofactor. L-ascorbate serves as cofactor. As to expression, expressed in roots, leaves and stems. Expressed at low levels in seeds.

It carries out the reaction a (2S)-flavan-4-one + 2-oxoglutarate + O2 = a (2R,3R)-dihydroflavonol + succinate + CO2. Its pathway is secondary metabolite biosynthesis; flavonoid biosynthesis. In terms of biological role, catalyzes the 3-beta-hydroxylation of 2S-flavanones to 2R,3R-dihydroflavonols which are intermediates in the biosynthesis of flavonols, anthocyanidins, catechins and proanthocyanidins in plants. Converts (2S)-eriodictyol to (+)-taxifolin and (2S)-naringenin to (+)-(2R/3R)-dihydrokaempferol in vitro. This is Flavanone 3-dioxygenase 2 from Oryza sativa subsp. japonica (Rice).